The chain runs to 262 residues: Hydroxyethylthiazole kinase (262 aa).

A substrate-binding site is contributed by methionine 44. The ATP site is built by arginine 118 and threonine 166. Substrate is bound at residue glycine 193.

This sequence belongs to the Thz kinase family. Requires Mg(2+) as cofactor.

The enzyme catalyses 5-(2-hydroxyethyl)-4-methylthiazole + ATP = 4-methyl-5-(2-phosphooxyethyl)-thiazole + ADP + H(+). It functions in the pathway cofactor biosynthesis; thiamine diphosphate biosynthesis; 4-methyl-5-(2-phosphoethyl)-thiazole from 5-(2-hydroxyethyl)-4-methylthiazole: step 1/1. Catalyzes the phosphorylation of the hydroxyl group of 4-methyl-5-beta-hydroxyethylthiazole (THZ). The protein is Hydroxyethylthiazole kinase of Chlamydia caviae (strain ATCC VR-813 / DSM 19441 / 03DC25 / GPIC) (Chlamydophila caviae).